Consider the following 942-residue polypeptide: Isoleucine--tRNA ligase (942 aa).

The 'HIGH' region motif lies at 58 to 68 (PYANGDIHLGH). L-isoleucyl-5'-AMP is bound at residue E567. Positions 608-612 (KMSKS) match the 'KMSKS' region motif. K611 contributes to the ATP binding site. Residues C905, C908, C925, and C928 each coordinate Zn(2+).

Belongs to the class-I aminoacyl-tRNA synthetase family. IleS type 1 subfamily. In terms of assembly, monomer. Requires Zn(2+) as cofactor.

The protein resides in the cytoplasm. The enzyme catalyses tRNA(Ile) + L-isoleucine + ATP = L-isoleucyl-tRNA(Ile) + AMP + diphosphate. Its function is as follows. Catalyzes the attachment of isoleucine to tRNA(Ile). As IleRS can inadvertently accommodate and process structurally similar amino acids such as valine, to avoid such errors it has two additional distinct tRNA(Ile)-dependent editing activities. One activity is designated as 'pretransfer' editing and involves the hydrolysis of activated Val-AMP. The other activity is designated 'posttransfer' editing and involves deacylation of mischarged Val-tRNA(Ile). In Pseudoalteromonas translucida (strain TAC 125), this protein is Isoleucine--tRNA ligase.